The chain runs to 343 residues: Protein RecA (343 aa).

64-71 (GPESSGKT) provides a ligand contact to ATP.

Belongs to the RecA family.

The protein resides in the cytoplasm. In terms of biological role, can catalyze the hydrolysis of ATP in the presence of single-stranded DNA, the ATP-dependent uptake of single-stranded DNA by duplex DNA, and the ATP-dependent hybridization of homologous single-stranded DNAs. It interacts with LexA causing its activation and leading to its autocatalytic cleavage. The polypeptide is Protein RecA (Bacillus mycoides (strain KBAB4) (Bacillus weihenstephanensis)).